Reading from the N-terminus, the 249-residue chain is MAADLLDVHGLLFKRQQYKEADLLAKLWTKELGIVTVIAKGGMRPKSQLAAAVLPFTEGTFGILTRYKGISQLRTYKKLSQHDELFTDLDKNAYLSYLFDLADHAFSEYQKLGGYYDLLLVAFNRIVAGQDPEIIAQIVQLQLLDAFGVAPQLGACVICGKEKGIFDYSIAAGGVVCSDHFRSVSRLHLSPKATALIRTLALLPISRLGEIQIGEDLKKESRRAIAQIYQATVDLHLPSLRFLNEVRGS.

It belongs to the RecO family.

In terms of biological role, involved in DNA repair and RecF pathway recombination. This chain is DNA repair protein RecO, found in Lactobacillus delbrueckii subsp. bulgaricus (strain ATCC 11842 / DSM 20081 / BCRC 10696 / JCM 1002 / NBRC 13953 / NCIMB 11778 / NCTC 12712 / WDCM 00102 / Lb 14).